The following is a 506-amino-acid chain: Transforming growth factor beta-1-induced transcript 1 protein (506 aa).

Positions 3–15 (DLDALLADLQITT) match the LD motif 1 motif. The disordered stretch occupies residues 15–62 (TPPRCPVLLTDSPEKPQPTETRPPPPPYDPKTAMSNKTSDHETFPVDK). A compositionally biased stretch (basic and acidic residues) spans 52-62 (TSDHETFPVDK). 2 consecutive short sequence motifs (LD motif) follow at residues 87 to 99 (ELDR…NATQ) and 139 to 150 (ELDRLMASLSDF). Disordered stretches follow at residues 154–201 (NTVS…PTPK) and 221–244 (SDEV…ATSV). Over residues 168 to 177 (GSEEVSRPGD) the composition is skewed to basic and acidic residues. Positions 248–260 (DLDSMLVKLQSGL) match the LD motif 4 motif. LIM zinc-binding domains are found at residues 271–330 (GLCE…LYAP), 331–388 (RCAL…RLFG), 389–448 (AVCA…RRGS), and 449–506 (LCAG…RLYG).

The protein belongs to the paxillin family. As to quaternary structure, interacts with tcf3 and tcf7l2.

Its subcellular location is the cell junction. The protein resides in the focal adhesion. It is found in the nucleus matrix. The protein localises to the cytoplasm. It localises to the cytoskeleton. In terms of biological role, functions as a molecular adapter coordinating multiple protein-protein interactions at the focal adhesion complex and in the nucleus. May regulate both Wnt and steroid signaling pathways and play a role in the processes of cell growth, proliferation, migration, differentiation and senescence. May have a zinc-dependent DNA-binding activity. The chain is Transforming growth factor beta-1-induced transcript 1 protein (tgfb1i1) from Xenopus laevis (African clawed frog).